We begin with the raw amino-acid sequence, 245 residues long: Membrane-spanning 4-domains subfamily A member 15 (245 aa).

The disordered stretch occupies residues 1–30; sequence MWERRGRGESAAGTAAVASRNASGLRPPPA. 4 helical membrane-spanning segments follow: residues 78–98, 103–123, 147–167, and 176–196; these read GTVQ…LLMV, LGML…FIIS, ILSA…FGVT, and LAVL…ATHF.

This sequence belongs to the MS4A family.

Its subcellular location is the membrane. Its function is as follows. May be involved in signal transduction as a component of a multimeric receptor complex. The protein is Membrane-spanning 4-domains subfamily A member 15 (Ms4a15) of Mus musculus (Mouse).